The primary structure comprises 482 residues: [Fructose-bisphosphate aldolase]-lysine N-methyltransferase, chloroplastic (482 aa).

Residues 1–57 (MSASVAVVSGFLRIPSIQKSQNPSFLFSRPKKSLVRPISASSSELPENVRNFWKWLR) constitute a chloroplast transit peptide. The SET domain occupies 59–282 (QGVVSGKSVA…AGEQVYIQYD (224 aa)). S-adenosyl-L-methionine-binding positions include 75 to 77 (EGL) and R217. Residues R217, R221, and D234 each contribute to the substrate site. 237 to 238 (NH) is a binding site for S-adenosyl-L-methionine. The substrate site is built by Y249, Y281, and Y294.

It belongs to the class V-like SAM-binding methyltransferase superfamily. Plant protein-lysine LSMT methyltransferase family.

The protein resides in the plastid. It localises to the chloroplast stroma. The catalysed reaction is [fructose-bisphosphate aldolase]-L-lysine + 3 S-adenosyl-L-methionine = [fructose-bisphosphate aldolase]-N(6),N(6),N(6)-trimethyl-L-lysine + 3 S-adenosyl-L-homocysteine + 3 H(+). Protein-lysine methyltransferase methylating chloroplastic fructose 1,6-bisphosphate aldolases. Can also use with low efficiency gamma-tocopherol methyltransferase as substrate, but not a cytosolic aldolase. Able to interact with unmethylated Rubisco, but unlike in pea, the complex is catalytically unproductive. The sequence is that of [Fructose-bisphosphate aldolase]-lysine N-methyltransferase, chloroplastic (LSMT-L) from Arabidopsis thaliana (Mouse-ear cress).